The following is a 536-amino-acid chain: E3 ubiquitin-protein ligase Godzilla (536 aa).

A signal peptide spans 1–21 (MSKRSCQILTLLGLCLVCHEA). Over 22-174 (TLVGGHVLVY…DELPFNINTQ (153 aa)) the chain is Extracellular. One can recognise a PA domain in the interval 89–151 (FVALVARGEC…FVGHTTGKAL (63 aa)). Residues asparagine 109 and asparagine 132 are each glycosylated (N-linked (GlcNAc...) asparagine). A helical transmembrane segment spans residues 175 to 195 (LILPFSILIGMCFIIMVIYMI). Residues 196 to 536 (YKCIREQRRL…HSASDRQFLI (341 aa)) are Cytoplasmic-facing. An RING-type; atypical zinc finger spans residues 235-277 (CVICLEDFIEDDKLRVLPCSHPYHTHCIDPWLTENRRVCPICK). Disordered regions lie at residues 287 to 334 (RASR…GAAG) and 350 to 372 (HGTF…SDDE). Residues 307–334 (TPLLQQQQSNGRQVGQVSSASSAGGAAG) are compositionally biased toward low complexity.

The protein belongs to the Godzilla family.

It localises to the endosome membrane. It carries out the reaction S-ubiquitinyl-[E2 ubiquitin-conjugating enzyme]-L-cysteine + [acceptor protein]-L-lysine = [E2 ubiquitin-conjugating enzyme]-L-cysteine + N(6)-ubiquitinyl-[acceptor protein]-L-lysine.. It participates in protein modification; protein ubiquitination. Endosomal E3 ubiquitin-protein ligase that regulates the recycling endosome pathway by mediating ubiquitination of Synaptobrevin (Syb). Also acts as a regulator of transcytosis in wing imaginal disks by catalyzing ubiquitination of Syb: ubiquitination of Syb promotes transcytosis of wingless (wg) to the basolateral surface. This Drosophila melanogaster (Fruit fly) protein is E3 ubiquitin-protein ligase Godzilla.